A 180-amino-acid polypeptide reads, in one-letter code: Adipocyte-related X-chromosome expressed sequence 1 (180 aa).

The Cytoplasmic segment spans residues 1–11 (MNSLLSRANSL). The helical; Signal-anchor for type II membrane protein transmembrane segment at 12 to 32 (FAFTLSVMAALTLGCILTTAF) threads the bilayer. The Lumenal segment spans residues 33–180 (KDRSAPVRLH…PDSYEIATTF (148 aa)). The N-linked (GlcNAc...) asparagine glycan is linked to asparagine 141.

The protein belongs to the SPCS3 family. Strongly expressed in epididymal white and brown adipose tissue with low levels in heart.

The protein localises to the endoplasmic reticulum membrane. Its function is as follows. Plays a role in adipogenesis. The chain is Adipocyte-related X-chromosome expressed sequence 1 from Mus musculus (Mouse).